The chain runs to 489 residues: uncharacterized protein (489 aa).

Residues 2-84 (IKITVKRFNG…GMIIEPLRGF (83 aa)) enclose the 2Fe-2S ferredoxin-type domain. Residues Cys-48, Cys-53, Cys-56, and Cys-68 each contribute to the [2Fe-2S] cluster site. 2 consecutive 4Fe-4S ferredoxin-type domains span residues 123 to 155 (KYVE…YPGP) and 177 to 205 (TAYF…IVHR). Residues Cys-134, Cys-137, Cys-140, Cys-144, Cys-186, Cys-189, Cys-192, and Cys-196 each coordinate [4Fe-4S] cluster.

It belongs to the succinate dehydrogenase/fumarate reductase iron-sulfur protein family.

This is an uncharacterized protein from Methanocaldococcus jannaschii (strain ATCC 43067 / DSM 2661 / JAL-1 / JCM 10045 / NBRC 100440) (Methanococcus jannaschii).